Consider the following 273-residue polypeptide: WIMGHMVNSIAQIDEFVNLGANSIETDVSFDKQANPEYMYHGTPCDCGRDCLHWENFNDFLKGLRKATTPGDSKYHEKLILVVFDLKTGSLYDNQAYDAGTKLAKNLLEHYWNNGNNGGRAYIVLSIPNLNHYKLIAGFKDTLKNEGHEDLLEKVGHDFSGNDDIPDVEKAYKNAGVTGHVWQSDGITNCLPRGLSRVKLAIANRDSGSGIINKVYYWTVDKRSTTRNSLDAGVDGIMTNYPGVIADVLSESAYKNKYKIATYEDNPWETFKP.

His-5 is an active-site residue. Glu-25 and Asp-27 together coordinate Mg(2+). Catalysis depends on His-41, which acts as the Nucleophile. Intrachain disulfides connect Cys-45/Cys-51 and Cys-47/Cys-190. Asp-85 provides a ligand contact to Mg(2+).

The protein belongs to the arthropod phospholipase D family. Class II subfamily. Requires Mg(2+) as cofactor. As to expression, expressed by the venom gland.

Its subcellular location is the secreted. The enzyme catalyses an N-(acyl)-sphingosylphosphocholine = an N-(acyl)-sphingosyl-1,3-cyclic phosphate + choline. The catalysed reaction is an N-(acyl)-sphingosylphosphoethanolamine = an N-(acyl)-sphingosyl-1,3-cyclic phosphate + ethanolamine. It catalyses the reaction a 1-acyl-sn-glycero-3-phosphocholine = a 1-acyl-sn-glycero-2,3-cyclic phosphate + choline. It carries out the reaction a 1-acyl-sn-glycero-3-phosphoethanolamine = a 1-acyl-sn-glycero-2,3-cyclic phosphate + ethanolamine. Dermonecrotic toxins cleave the phosphodiester linkage between the phosphate and headgroup of certain phospholipids (sphingolipid and lysolipid substrates), forming an alcohol (often choline) and a cyclic phosphate. This toxin acts on sphingomyelin (SM). It may also act on ceramide phosphoethanolamine (CPE), lysophosphatidylcholine (LPC) and lysophosphatidylethanolamine (LPE), but not on lysophosphatidylserine (LPS), and lysophosphatidylglycerol (LPG). It acts by transphosphatidylation, releasing exclusively cyclic phosphate products as second products. Induces dermonecrosis, hemolysis, increased vascular permeability, edema, inflammatory response, and platelet aggregation. This is Dermonecrotic toxin LruSicTox-alphaIC1b from Loxosceles rufescens (Mediterranean recluse spider).